The chain runs to 84 residues: Mu-Sparatoxin-Hp1 (84 aa).

The signal sequence occupies residues 1–20 (MKIAIVMTLLLVAFSTASFA). Positions 21–35 (IEPIERAALDLVMAR) are excised as a propeptide. 3 cysteine pairs are disulfide-bonded: cysteine 54-cysteine 68, cysteine 61-cysteine 73, and cysteine 67-cysteine 78. Leucine 82 carries the post-translational modification Leucine amide.

In terms of tissue distribution, expressed by the venom gland.

Its subcellular location is the secreted. Functionally, weakly nhibits voltage-gated sodium channels Nav1.7/SCN9A. High concentration of the toxin (3 uM) inhibits Nav1.7/SCN9A currents by 79%. The chain is Mu-Sparatoxin-Hp1 from Heteropoda pingtungensis (Pingtung huntsman spider).